A 545-amino-acid polypeptide reads, in one-letter code: Glutamine-dependent NAD(+) synthetase (545 aa).

A CN hydrolase domain is found at L5–R247. Residue E46 is the Proton acceptor; for glutaminase activity of the active site. K113 functions as the For glutaminase activity in the catalytic mechanism. Y119 contributes to the L-glutamine binding site. The active-site Nucleophile; for glutaminase activity is the C151. L-glutamine is bound by residues S177 and K183. Residues V269–G545 are ligase. G292–S299 provides a ligand contact to ATP. N375 lines the deamido-NAD(+) pocket. T399 is a binding site for ATP. Deamido-NAD(+) is bound by residues E404 and K516.

This sequence in the C-terminal section; belongs to the NAD synthetase family.

The catalysed reaction is deamido-NAD(+) + L-glutamine + ATP + H2O = L-glutamate + AMP + diphosphate + NAD(+) + H(+). The protein operates within cofactor biosynthesis; NAD(+) biosynthesis; NAD(+) from deamido-NAD(+) (L-Gln route): step 1/1. Its function is as follows. Catalyzes the ATP-dependent amidation of deamido-NAD to form NAD. Uses L-glutamine as a nitrogen source. The chain is Glutamine-dependent NAD(+) synthetase from Xylella fastidiosa (strain 9a5c).